The sequence spans 386 residues: Signal transduction histidine-protein kinase/phosphatase DegS (386 aa).

One can recognise a Histidine kinase domain in the interval 188-384 (KLSREIHDGP…TIIISIPITT (197 aa)). Residue histidine 194 is modified to Phosphohistidine; by autocatalysis.

In terms of processing, autophosphorylated.

Its subcellular location is the cytoplasm. It carries out the reaction ATP + protein L-histidine = ADP + protein N-phospho-L-histidine.. In terms of biological role, member of the two-component regulatory system DegS/DegU, which plays an important role in the transition growth phase. Acts as both a protein kinase that undergoes autophosphorylation and subsequently transfers the phosphate to DegU, and a protein phosphatase that dephosphorylates phospho-DegU. This chain is Signal transduction histidine-protein kinase/phosphatase DegS (degS), found in Brevibacillus brevis (Bacillus brevis).